The sequence spans 365 residues: Forkhead box protein E4 (365 aa).

Basic and acidic residues predominate over residues 1–13 (MDSPDSVRVKCES). The interval 1 to 46 (MDSPDSVRVKCESKGSCSPEEGLNNGLPEEHNQASGGRRRKRPVQR) is disordered. A DNA-binding region (fork-head) is located at residues 48 to 142 (KPPYSYIALI…DNGSFLRRRK (95 aa)).

First expressed at the end of gastrulation (stage 13) in the anterior ectodermal placode. During intermediate neural plate stages (stages 14-16), expression expands to the presumptive nasal ectoderm (PNE) and the presumptive lens ectoderm (PLE). By stages 18-21, expression begins to deplete in the PNE, while intensifying in the PLE so that by late neural stages (stages 22), expression is restricted to the PLE. Throughout tailbud stages (stage 23-31), expression is maintained in the lens placode and lens vesicle. In the maturing lens (stage 32-onwards), expression is restricted to the anterior lens epithelium, where it remains during the tadpole stage. In tadpoles there is additional expression in the ventral midline of the pharynx. Expression continues in the adult eye.

It is found in the nucleus. Functionally, probable transcription factor. Mediates lens formation in the embryo by promoting the proliferation of the specified lens ectoderm and suppressing its terminal differentiation. This Xenopus laevis (African clawed frog) protein is Forkhead box protein E4.